The chain runs to 121 residues: Large ribosomal subunit protein bL12 (121 aa).

Belongs to the bacterial ribosomal protein bL12 family. Homodimer. Part of the ribosomal stalk of the 50S ribosomal subunit. Forms a multimeric L10(L12)X complex, where L10 forms an elongated spine to which 2 to 4 L12 dimers bind in a sequential fashion. Binds GTP-bound translation factors.

In terms of biological role, forms part of the ribosomal stalk which helps the ribosome interact with GTP-bound translation factors. Is thus essential for accurate translation. This chain is Large ribosomal subunit protein bL12, found in Pseudomonas putida (strain GB-1).